We begin with the raw amino-acid sequence, 208 residues long: N-(5'-phosphoribosyl)anthranilate isomerase (208 aa).

The protein belongs to the TrpF family.

The enzyme catalyses N-(5-phospho-beta-D-ribosyl)anthranilate = 1-(2-carboxyphenylamino)-1-deoxy-D-ribulose 5-phosphate. It participates in amino-acid biosynthesis; L-tryptophan biosynthesis; L-tryptophan from chorismate: step 3/5. The polypeptide is N-(5'-phosphoribosyl)anthranilate isomerase (Chlamydia trachomatis serovar L2 (strain ATCC VR-902B / DSM 19102 / 434/Bu)).